A 555-amino-acid polypeptide reads, in one-letter code: E3 ubiquitin-protein ligase NEURL1B (555 aa).

The NHR 1 domain maps to 38–194 (APRFHAQAKG…ITDEVQLLES (157 aa)). T199 carries the phosphothreonine modification. The NHR 2 domain maps to 279 to 433 (DLRFHATRGP…GVAGQLRLLG (155 aa)). Positions 436–493 (QSSPATTTPSGSLSGSQDDSDSDMTFSVNQSSSASESSLVTAPSSPLSPPVSPVFSPP) are disordered. The span at 462–480 (SVNQSSSASESSLVTAPSS) shows a compositional bias: low complexity. Over residues 481–493 (PLSPPVSPVFSPP) the composition is skewed to pro residues. The segment at 503–543 (CTVCFDGEVDTVIYTCGHMCLCHSCGLRLKRQARACCPICR) adopts an RING-type zinc-finger fold.

As to quaternary structure, interacts with JAG1, DLL1 and DLL4. Highest expression in brain, prostate and small intestine. In the brain the levels are higher in fetal than in adult stage. In the adult brain the highest levels are detected in the olfactory system, cerebellar cortex, optic nerve and the frontal lobe.

It is found in the cytoplasm. It carries out the reaction S-ubiquitinyl-[E2 ubiquitin-conjugating enzyme]-L-cysteine + [acceptor protein]-L-lysine = [E2 ubiquitin-conjugating enzyme]-L-cysteine + N(6)-ubiquitinyl-[acceptor protein]-L-lysine.. It functions in the pathway protein modification; protein ubiquitination. Functionally, E3 ubiquitin-protein ligase involved in regulation of the Notch pathway through influencing the stability and activity of several Notch ligands. The polypeptide is E3 ubiquitin-protein ligase NEURL1B (NEURL1B) (Homo sapiens (Human)).